Reading from the N-terminus, the 1558-residue chain is ABC transporter NFT1 (1558 aa).

Residues 1–29 (MIKNGTCPYWERDDLSECARREYIEFKFP) are Extracellular-facing. Asparagine 4 carries N-linked (GlcNAc...) asparagine glycosylation. Residues 30-50 (LFILLTGMIYAFCKVFRAFYL) traverse the membrane as a helical segment. Topologically, residues 51–103 (RGKNHTNEAPEFEEQGNGNHEYARFSVLRLKSAWESRSFCNVNNRSTFDKFKK) are cytoplasmic. A helical membrane pass occupies residues 104–124 (FIEGAFIVLQLTIHLYILSSM). Residues 125–130 (PMDNKK) lie on the Extracellular side of the membrane. A helical membrane pass occupies residues 131–151 (FFHQGFLVQMFLWILLLVVIT). Topologically, residues 152–169 (LRLISASQSFRWVLACKR) are cytoplasmic. Residues 170–190 (DLWAVSFYSYASLFTLSILPL) traverse the membrane as a helical segment. Over 191 to 201 (RSVFIGKIKDK) the chain is Extracellular. The helical transmembrane segment at 202–222 (IMVKYIISETFIDLALLLLLS) threads the bilayer. The Cytoplasmic segment spans residues 223–302 (TSSIEGTRYS…SSKKGRLLPN (80 aa)). The chain crosses the membrane as a helical span at residues 303 to 323 (IICYFKAVFISQLFLAFVSSF). One can recognise an ABC transmembrane type-1 1 domain in the interval 311–621 (FISQLFLAFV…IASTVSLLIQ (311 aa)). Residues 324–351 (LNFVPSLLMPRILSYVNDPKSKSWNLVS) are Extracellular-facing. The helical transmembrane segment at 352-374 (LYVSSMLVSKIIATTCRGQGLFL) threads the bilayer. The Cytoplasmic portion of the chain corresponds to 375 to 449 (GEKGTMQLRT…VMSIDAFKVS (75 aa)). The tract at residues 410–434 (NASTSFEENPDSSEAEPRKKSSRKD) is disordered. Positions 424–434 (AEPRKKSSRKD) are enriched in basic and acidic residues. The chain crosses the membrane as a helical span at residues 450-470 (EAMNTFYLACEAVFMTVTALM). Topologically, residues 471–481 (ILYSLLGWSAF) are extracellular. A helical membrane pass occupies residues 482–504 (AGTFALLAMIPLNFWCATFYGNY). The Cytoplasmic segment spans residues 505-558 (QADQLILTDKRTSGISEALNSIRVIKLLAWENLFYQKIINVRDGEIRLLKKKAT). The chain crosses the membrane as a helical span at residues 559-579 (IFFLNHLIWFFGPTLVSAITF). Over 580 to 584 (SVFIK) the chain is Extracellular. A helical membrane pass occupies residues 585 to 605 (FQNQTLTPTIAFTALSLFAIL). The Cytoplasmic portion of the chain corresponds to 606–953 (RTPMDQIAST…KFSAYKWLAD (348 aa)). One can recognise an ABC transporter 1 domain in the interval 651-892 (FGFEDASMEW…NEFLRESINN (242 aa)). 686 to 693 (GPTGSGKS) serves as a coordination point for ATP. A compositionally biased stretch (polar residues) spans 892 to 901 (NDSKNTTHNQ). Positions 892-926 (NDSKNTTHNQIDLKRSTTSKKTKNGDPEGGNSQDE) are disordered. Residues 954–974 (YFGGLGVVFVFTSSSILIHGI) form a helical membrane-spanning segment. The region spanning 961-1251 (VFVFTSSSIL…IIKVFSSVEL (291 aa)) is the ABC transmembrane type-1 2 domain. The Extracellular portion of the chain corresponds to 975 to 1013 (TLSQGFWLRYWLDTGSSGSKSTWLYRIVEGHSNIYFLLT). A helical transmembrane segment spans residues 1014 to 1034 (YIIIGLVSSFLTSGKVWIAII). Residues 1035 to 1082 (SGTNVTKKIFAKLLSSILYAKLRFHNVTPTGRIMNRFSKDMDIIDQQL) are Cytoplasmic-facing. Residues 1083–1105 (IPNFEGLSYSVVVCLWIILLIGY) traverse the membrane as a helical segment. The Extracellular segment spans residues 1106-1109 (VTPQ). Residues 1110-1132 (FLLFAIPLCALYYTVCTLYLRAS) traverse the membrane as a helical segment. Over 1133–1199 (RELKRIDNIN…ATEWITYRVD (67 aa)) the chain is Cytoplasmic. The helical transmembrane segment at 1200-1220 (IIGTLVLFSSSVMIIMKASYL) threads the bilayer. Over 1221 to 1222 (DA) the chain is Extracellular. The chain crosses the membrane as a helical span at residues 1223 to 1243 (GLAGILLSNAFSFTETAQWII). The Cytoplasmic segment spans residues 1244-1558 (KVFSSVELLM…LAKVSFDNKR (315 aa)). The region spanning 1285–1538 (VELKNLSLRY…RNTIFYRLCR (254 aa)) is the ABC transporter 2 domain. ATP is bound at residue 1319-1326 (GRTGAGKS).

Belongs to the ABC transporter superfamily. ABCC family. Conjugate transporter (TC 3.A.1.208) subfamily.

Its subcellular location is the membrane. In Saccharomyces cerevisiae (Baker's yeast), this protein is ABC transporter NFT1 (NFT1).